Here is a 466-residue protein sequence, read N- to C-terminus: ATP synthase subunit beta (466 aa).

Gly-156–Thr-163 provides a ligand contact to ATP.

This sequence belongs to the ATPase alpha/beta chains family. F-type ATPases have 2 components, CF(1) - the catalytic core - and CF(0) - the membrane proton channel. CF(1) has five subunits: alpha(3), beta(3), gamma(1), delta(1), epsilon(1). CF(0) has three main subunits: a(1), b(2) and c(9-12). The alpha and beta chains form an alternating ring which encloses part of the gamma chain. CF(1) is attached to CF(0) by a central stalk formed by the gamma and epsilon chains, while a peripheral stalk is formed by the delta and b chains.

It is found in the cell inner membrane. It carries out the reaction ATP + H2O + 4 H(+)(in) = ADP + phosphate + 5 H(+)(out). Its function is as follows. Produces ATP from ADP in the presence of a proton gradient across the membrane. The catalytic sites are hosted primarily by the beta subunits. The polypeptide is ATP synthase subunit beta (Dechloromonas aromatica (strain RCB)).